We begin with the raw amino-acid sequence, 273 residues long: Phosphate import ATP-binding protein PstB (273 aa).

Positions 18-257 constitute an ABC transporter domain; the sequence is ISLQNVTISY…EFDKTKKIFN (240 aa). 50 to 57 serves as a coordination point for ATP; it reads GPSGCGKS.

Belongs to the ABC transporter superfamily. Phosphate importer (TC 3.A.1.7) family. As to quaternary structure, the complex is composed of two ATP-binding proteins (PstB), two transmembrane proteins (PstC and PstA) and a solute-binding protein (PstS).

Its subcellular location is the cell inner membrane. It catalyses the reaction phosphate(out) + ATP + H2O = ADP + 2 phosphate(in) + H(+). Functionally, part of the ABC transporter complex PstSACB involved in phosphate import. Responsible for energy coupling to the transport system. In Prochlorococcus marinus (strain SARG / CCMP1375 / SS120), this protein is Phosphate import ATP-binding protein PstB.